Here is a 423-residue protein sequence, read N- to C-terminus: Serine--tRNA ligase 2 (423 aa).

Threonine 231–glutamate 233 contacts L-serine. Arginine 262 to glutamate 264 contacts ATP. Glutamate 285 is a binding site for L-serine. Glutamate 349 to serine 352 is an ATP binding site. Serine 384 is a binding site for L-serine.

The protein belongs to the class-II aminoacyl-tRNA synthetase family. Type-1 seryl-tRNA synthetase subfamily. Homodimer. The tRNA molecule binds across the dimer.

It is found in the cytoplasm. It carries out the reaction tRNA(Ser) + L-serine + ATP = L-seryl-tRNA(Ser) + AMP + diphosphate + H(+). The catalysed reaction is tRNA(Sec) + L-serine + ATP = L-seryl-tRNA(Sec) + AMP + diphosphate + H(+). The protein operates within aminoacyl-tRNA biosynthesis; selenocysteinyl-tRNA(Sec) biosynthesis; L-seryl-tRNA(Sec) from L-serine and tRNA(Sec): step 1/1. Catalyzes the attachment of serine to tRNA(Ser). Is also able to aminoacylate tRNA(Sec) with serine, to form the misacylated tRNA L-seryl-tRNA(Sec), which will be further converted into selenocysteinyl-tRNA(Sec). In Enterococcus faecalis (strain ATCC 700802 / V583), this protein is Serine--tRNA ligase 2.